A 101-amino-acid chain; its full sequence is Ribonuclease kappa-B (101 aa).

2 helical membrane passes run 13-33 and 68-88; these read ACGIVLSVWGVIMLVLLGVFF and VSYNCFIAAAIYIVLGGFSFC.

Belongs to the RNase K family.

It is found in the membrane. Endoribonuclease which preferentially cleaves ApU and ApG phosphodiester bonds. The protein is Ribonuclease kappa-B (rnasek-b) of Xenopus laevis (African clawed frog).